The following is a 207-amino-acid chain: Ribosomal RNA small subunit methyltransferase G (207 aa).

Residues Gly74, Leu79, 125-126 (VE), and Arg140 each bind S-adenosyl-L-methionine.

This sequence belongs to the methyltransferase superfamily. RNA methyltransferase RsmG family.

The protein resides in the cytoplasm. It catalyses the reaction guanosine(527) in 16S rRNA + S-adenosyl-L-methionine = N(7)-methylguanosine(527) in 16S rRNA + S-adenosyl-L-homocysteine. In terms of biological role, specifically methylates the N7 position of guanine in position 527 of 16S rRNA. The sequence is that of Ribosomal RNA small subunit methyltransferase G from Shewanella loihica (strain ATCC BAA-1088 / PV-4).